The sequence spans 319 residues: 2-oxoglutarate and iron-dependent oxygenase domain-containing protein 3 (319 aa).

Positions Met-1–Glu-34 are disordered. Residues Met-1–Pro-42 lie on the Cytoplasmic side of the membrane. Basic and acidic residues predominate over residues Ala-18 to Glu-34. Residues Trp-43–Gly-65 form a helical; Signal-anchor for type II membrane protein membrane-spanning segment. Residues Ala-66–Pro-319 are Lumenal-facing. The 103-residue stretch at Lys-207 to Pro-309 folds into the Fe2OG dioxygenase domain. N-linked (GlcNAc...) asparagine glycosylation is present at Asn-215. Fe cation contacts are provided by His-230, Asp-232, and His-288. The active site involves Arg-298. Residue Arg-298 participates in 2-oxoglutarate binding.

The protein belongs to the OGFOD3 family. Fe(2+) is required as a cofactor. L-ascorbate serves as cofactor.

The protein resides in the membrane. This chain is 2-oxoglutarate and iron-dependent oxygenase domain-containing protein 3 (OGFOD3), found in Homo sapiens (Human).